Reading from the N-terminus, the 85-residue chain is Large ribosomal subunit protein bL27 (85 aa).

Positions 1-21 are disordered; the sequence is MAHKKGGGSTHNGRDSKPKML.

This sequence belongs to the bacterial ribosomal protein bL27 family.

In Albidiferax ferrireducens (strain ATCC BAA-621 / DSM 15236 / T118) (Rhodoferax ferrireducens), this protein is Large ribosomal subunit protein bL27.